Reading from the N-terminus, the 244-residue chain is MHDSDTDLIYSQAHNQVKNFTFDAQVVEVFPDMISRSVPGYKTIIDTIGRLSERFTQDDSNIYDLGCSLGAATLAMRKGITANNCKIIGVDNSIDMVKRCKMHVDAFKGDTPVTIIEGNIQDIDIENASMVVLNFTLQFIEKSQRQALLSKIAQGLKPGGLLVLSEKISSDDNVIDDVLINLHHNFKRDNGYSELEVAQKRSALEKVMLTDSLDVHKERLTQAGFQHVSLWFQCFNFTSLIAIK.

S-adenosyl-L-methionine-binding positions include Tyr41, 66 to 68, 91 to 92, Asn134, and Arg201; these read GCS and DN.

It belongs to the class I-like SAM-binding methyltransferase superfamily. Cx-SAM synthase family. As to quaternary structure, homodimer.

The catalysed reaction is prephenate + S-adenosyl-L-methionine = carboxy-S-adenosyl-L-methionine + 3-phenylpyruvate + H2O. Functionally, catalyzes the conversion of S-adenosyl-L-methionine (SAM) to carboxy-S-adenosyl-L-methionine (Cx-SAM). This chain is Carboxy-S-adenosyl-L-methionine synthase, found in Colwellia psychrerythraea (strain 34H / ATCC BAA-681) (Vibrio psychroerythus).